Reading from the N-terminus, the 73-residue chain is Sec-independent protein translocase protein TatA (73 aa).

A helical membrane pass occupies residues 1 to 21 (MGSFSIWHWVIVLVVVVLIFG). Residues 43 to 73 (MKSEGEDAAQTPPAAQKEGGRVIDAEPADKK) form a disordered region. The segment covering 60 to 73 (EGGRVIDAEPADKK) has biased composition (basic and acidic residues).

It belongs to the TatA/E family. In terms of assembly, the Tat system comprises two distinct complexes: a TatABC complex, containing multiple copies of TatA, TatB and TatC subunits, and a separate TatA complex, containing only TatA subunits. Substrates initially bind to the TatABC complex, which probably triggers association of the separate TatA complex to form the active translocon.

It is found in the cell inner membrane. In terms of biological role, part of the twin-arginine translocation (Tat) system that transports large folded proteins containing a characteristic twin-arginine motif in their signal peptide across membranes. TatA could form the protein-conducting channel of the Tat system. The protein is Sec-independent protein translocase protein TatA of Laribacter hongkongensis (strain HLHK9).